Reading from the N-terminus, the 1068-residue chain is DNA-directed RNA polymerase subunit beta (1068 aa).

The protein belongs to the RNA polymerase beta chain family. As to quaternary structure, in plastids the minimal PEP RNA polymerase catalytic core is composed of four subunits: alpha, beta, beta', and beta''. When a (nuclear-encoded) sigma factor is associated with the core the holoenzyme is formed, which can initiate transcription.

The protein localises to the plastid. The protein resides in the chloroplast. It carries out the reaction RNA(n) + a ribonucleoside 5'-triphosphate = RNA(n+1) + diphosphate. DNA-dependent RNA polymerase catalyzes the transcription of DNA into RNA using the four ribonucleoside triphosphates as substrates. This Staurastrum punctulatum (Green alga) protein is DNA-directed RNA polymerase subunit beta.